The primary structure comprises 360 residues: Phospho-N-acetylmuramoyl-pentapeptide-transferase (360 aa).

10 helical membrane-spanning segments follow: residues 21 to 41 (YITV…LWIG), 73 to 93 (TMGG…WANL), 94 to 114 (ANPY…IGFV), 132 to 152 (WKYF…YWLG), 168 to 188 (IMPQ…VGTG), 199 to 219 (GLAI…AWAT), 239 to 259 (VVVF…FNTY), 263 to 283 (VFMG…VAIL), 288 to 308 (FLLV…ILQV), and 338 to 358 (VIIR…VTLK).

The protein belongs to the glycosyltransferase 4 family. MraY subfamily. Mg(2+) serves as cofactor.

The protein localises to the cell inner membrane. It carries out the reaction UDP-N-acetyl-alpha-D-muramoyl-L-alanyl-gamma-D-glutamyl-meso-2,6-diaminopimeloyl-D-alanyl-D-alanine + di-trans,octa-cis-undecaprenyl phosphate = di-trans,octa-cis-undecaprenyl diphospho-N-acetyl-alpha-D-muramoyl-L-alanyl-D-glutamyl-meso-2,6-diaminopimeloyl-D-alanyl-D-alanine + UMP. It participates in cell wall biogenesis; peptidoglycan biosynthesis. Catalyzes the initial step of the lipid cycle reactions in the biosynthesis of the cell wall peptidoglycan: transfers peptidoglycan precursor phospho-MurNAc-pentapeptide from UDP-MurNAc-pentapeptide onto the lipid carrier undecaprenyl phosphate, yielding undecaprenyl-pyrophosphoryl-MurNAc-pentapeptide, known as lipid I. The polypeptide is Phospho-N-acetylmuramoyl-pentapeptide-transferase (Haemophilus influenzae (strain PittEE)).